We begin with the raw amino-acid sequence, 176 residues long: Xanthine-guanine phosphoribosyltransferase (176 aa).

5-phospho-alpha-D-ribose 1-diphosphate is bound by residues 51–52 (RG) and 110–118 (DDLVDTGKT). Mg(2+) is bound at residue aspartate 111. Aspartate 114 and isoleucine 157 together coordinate guanine. 2 residues coordinate xanthine: aspartate 114 and isoleucine 157. GMP-binding positions include 114–118 (DTGKT) and 156–157 (WI).

This sequence belongs to the purine/pyrimidine phosphoribosyltransferase family. XGPT subfamily. As to quaternary structure, homotetramer. Mg(2+) serves as cofactor.

Its subcellular location is the cell inner membrane. The catalysed reaction is GMP + diphosphate = guanine + 5-phospho-alpha-D-ribose 1-diphosphate. It catalyses the reaction XMP + diphosphate = xanthine + 5-phospho-alpha-D-ribose 1-diphosphate. It carries out the reaction IMP + diphosphate = hypoxanthine + 5-phospho-alpha-D-ribose 1-diphosphate. The protein operates within purine metabolism; GMP biosynthesis via salvage pathway; GMP from guanine: step 1/1. It participates in purine metabolism; XMP biosynthesis via salvage pathway; XMP from xanthine: step 1/1. In terms of biological role, purine salvage pathway enzyme that catalyzes the transfer of the ribosyl-5-phosphate group from 5-phospho-alpha-D-ribose 1-diphosphate (PRPP) to the N9 position of the 6-oxopurines guanine and xanthine to form the corresponding ribonucleotides GMP (guanosine 5'-monophosphate) and XMP (xanthosine 5'-monophosphate), with the release of PPi. To a lesser extent, also acts on hypoxanthine. This is Xanthine-guanine phosphoribosyltransferase from Bradyrhizobium diazoefficiens (strain JCM 10833 / BCRC 13528 / IAM 13628 / NBRC 14792 / USDA 110).